The chain runs to 949 residues: MTETPIAPLDDTPRFRYTAVLAGEIERAWQQQWADSGTFHVDNPVGSLAPADGSAVPADKMFVQDMFPYPSGEGLHVGHPLGYIATDVYARYYRMTGRNVLHALGFDAFGLPAEQYAIQTGTHPRTRTEANIVNFRRQLGRLGLGHDSRRSFATTDVDYYKWTQWIFLQIFNAWFDTDQNRARPIRELIAEFEAGTRQVGDGRSWADLDAGARADLVDAHRLVYLADSVVNWCPGLGTVLANEEVTADGRSERGNFPVFRKRLRQWMMRITAYSDRLLEDLDVLDWPDKVKTMQRNWIGRSTGAEVQFSTAAGDIEVFTTRPDTLFGATYMVLAPEHDLVDRLVASAWPDGTDARWTFGAATPAEAVAAYRAGIAAKSDLERQENKTKTGVFLGAYATNPANGQQVPVFIADYVLAGYGTGAIMAVPSGDQRDWDFATEFGLPIVEVVAGGDVTVEAYSGDGTMVNSGFLDGMDVATAKQAMTERLVADGRGRARVEYKLRDWLFARQRYWGEPFPVVYDSEGRAHGLPEGMLPVELPDVPDYSPVSFDPDDAGSEPSPPLGKVTDWVNVDLDLGDGLKPYTRDTNVMPQWAGSSWYELRYTDPYNSEALCAKENEAYWMGPRPAEHGPDDPGGVDLYVGGVEHAVLHLLYSRFWHKVLYDLGHVSSREPYRRLVNQGYIQAFAYTDSRGSYVPAAEVIERDGKFVWPGPDGETEVNQEFGKIGKSLKNSVSPDEICDNYGADTLRVYEMSMGPLEASRPWATKDVVGAYRFLQRVWRLVVDENTGETLATEDALDDDTLRLLHRTIAGTADDYASLRNNTAAAKLIEYTNHLTKQSVTARAALEPLVLMVAPLAPHLAEELWKRLGHEGSLAHGPFPLADERYLVEDTVEYPVQVNGKVRGRVTVPADAPADAVEAAALAEEKVVAFLDGRTPKKVIVVAGRLVNVVV.

Residues 68–79 carry the 'HIGH' region motif; that stretch reads PYPSGEGLHVGH. The tract at residues 540 to 562 is disordered; sequence VPDYSPVSFDPDDAGSEPSPPLG. The 'KMSKS' region motif lies at 722–726; sequence KIGKS. K725 lines the ATP pocket.

It belongs to the class-I aminoacyl-tRNA synthetase family.

Its subcellular location is the cytoplasm. The catalysed reaction is tRNA(Leu) + L-leucine + ATP = L-leucyl-tRNA(Leu) + AMP + diphosphate. This Mycolicibacterium gilvum (strain PYR-GCK) (Mycobacterium gilvum (strain PYR-GCK)) protein is Leucine--tRNA ligase.